A 162-amino-acid chain; its full sequence is 2-C-methyl-D-erythritol 2,4-cyclodiphosphate synthase (162 aa).

Residues Asp10 and His12 each contribute to the a divalent metal cation site. 4-CDP-2-C-methyl-D-erythritol 2-phosphate is bound by residues 10-12 (DVH) and 36-37 (HS). His44 provides a ligand contact to a divalent metal cation. 4-CDP-2-C-methyl-D-erythritol 2-phosphate contacts are provided by residues 58 to 60 (DIG), 63 to 67 (FPDTD), and Arg144.

The protein belongs to the IspF family. As to quaternary structure, homotrimer. Requires a divalent metal cation as cofactor.

It carries out the reaction 4-CDP-2-C-methyl-D-erythritol 2-phosphate = 2-C-methyl-D-erythritol 2,4-cyclic diphosphate + CMP. The protein operates within isoprenoid biosynthesis; isopentenyl diphosphate biosynthesis via DXP pathway; isopentenyl diphosphate from 1-deoxy-D-xylulose 5-phosphate: step 4/6. Its function is as follows. Involved in the biosynthesis of isopentenyl diphosphate (IPP) and dimethylallyl diphosphate (DMAPP), two major building blocks of isoprenoid compounds. Catalyzes the conversion of 4-diphosphocytidyl-2-C-methyl-D-erythritol 2-phosphate (CDP-ME2P) to 2-C-methyl-D-erythritol 2,4-cyclodiphosphate (ME-CPP) with a corresponding release of cytidine 5-monophosphate (CMP). This Laribacter hongkongensis (strain HLHK9) protein is 2-C-methyl-D-erythritol 2,4-cyclodiphosphate synthase.